The primary structure comprises 254 residues: 4-hydroxy-tetrahydrodipicolinate reductase (254 aa).

NAD(+) contacts are provided by residues 8–13 (GCSGKM), Asp35, 86–88 (CST), and 110–113 (SANM). Catalysis depends on His143, which acts as the Proton donor/acceptor. His144 contacts (S)-2,3,4,5-tetrahydrodipicolinate. Lys147 serves as the catalytic Proton donor. Residue 153–154 (GT) coordinates (S)-2,3,4,5-tetrahydrodipicolinate.

The protein belongs to the DapB family.

The protein resides in the cytoplasm. It carries out the reaction (S)-2,3,4,5-tetrahydrodipicolinate + NAD(+) + H2O = (2S,4S)-4-hydroxy-2,3,4,5-tetrahydrodipicolinate + NADH + H(+). The catalysed reaction is (S)-2,3,4,5-tetrahydrodipicolinate + NADP(+) + H2O = (2S,4S)-4-hydroxy-2,3,4,5-tetrahydrodipicolinate + NADPH + H(+). The protein operates within amino-acid biosynthesis; L-lysine biosynthesis via DAP pathway; (S)-tetrahydrodipicolinate from L-aspartate: step 4/4. In terms of biological role, catalyzes the conversion of 4-hydroxy-tetrahydrodipicolinate (HTPA) to tetrahydrodipicolinate. The protein is 4-hydroxy-tetrahydrodipicolinate reductase of Clostridium perfringens (strain 13 / Type A).